A 377-amino-acid chain; its full sequence is Beta sliding clamp (377 aa).

This sequence belongs to the beta sliding clamp family. In terms of assembly, forms a ring-shaped head-to-tail homodimer around DNA which binds and tethers DNA polymerases and other proteins to the DNA. The DNA replisome complex has a single clamp-loading complex (3 tau and 1 each of delta, delta', psi and chi subunits) which binds 3 Pol III cores (1 core on the leading strand and 2 on the lagging strand) each with a beta sliding clamp dimer. Additional proteins in the replisome are other copies of gamma, psi and chi, Ssb, DNA helicase and RNA primase.

The protein resides in the cytoplasm. Its function is as follows. Confers DNA tethering and processivity to DNA polymerases and other proteins. Acts as a clamp, forming a ring around DNA (a reaction catalyzed by the clamp-loading complex) which diffuses in an ATP-independent manner freely and bidirectionally along dsDNA. Initially characterized for its ability to contact the catalytic subunit of DNA polymerase III (Pol III), a complex, multichain enzyme responsible for most of the replicative synthesis in bacteria; Pol III exhibits 3'-5' exonuclease proofreading activity. The beta chain is required for initiation of replication as well as for processivity of DNA replication. The polypeptide is Beta sliding clamp (dnaN) (Staphylococcus aureus (strain COL)).